Here is a 122-residue protein sequence, read N- to C-terminus: Large ribosomal subunit protein uL14 (122 aa).

The protein belongs to the universal ribosomal protein uL14 family. As to quaternary structure, part of the 50S ribosomal subunit. Forms a cluster with proteins L3 and L19. In the 70S ribosome, L14 and L19 interact and together make contacts with the 16S rRNA in bridges B5 and B8.

Binds to 23S rRNA. Forms part of two intersubunit bridges in the 70S ribosome. The sequence is that of Large ribosomal subunit protein uL14 from Citrifermentans bemidjiense (strain ATCC BAA-1014 / DSM 16622 / JCM 12645 / Bem) (Geobacter bemidjiensis).